Reading from the N-terminus, the 293-residue chain is Lymphocyte antigen 6 complex locus protein G6f (293 aa).

Residues 1–19 form the signal peptide; the sequence is MAMVVFLLLYLCGHPQAAA. In terms of domain architecture, Ig-like V-type spans 20-124; that stretch reads DNIQTLYVPS…HKYQNWRVYD (105 aa). Residues 20-237 are Extracellular-facing; it reads DNIQTLYVPS…APLPSWDVSW (218 aa). An intrachain disulfide couples cysteine 37 to cysteine 108. N-linked (GlcNAc...) asparagine glycosylation is present at asparagine 90. Residues 238-258 traverse the membrane as a helical segment; sequence ILMLLFAAGQGVTIIALSIVI. Topologically, residues 259–293 are cytoplasmic; sequence WRHQRAQGTQDREPSIPHFKPEVQVYENIHLARLR. Position 284 is a phosphotyrosine (tyrosine 284).

In terms of assembly, homodimer; disulfide-linked. Interacts with GRB2 and GRB7 in a phosphorylation-dependent manner. In terms of processing, N-glycosylated.

It is found in the cell membrane. Functionally, may play a role in the downstream signal transduction pathways involving GRB2 and GRB7. This is Lymphocyte antigen 6 complex locus protein G6f (Ly6g6f) from Rattus norvegicus (Rat).